The sequence spans 1617 residues: Mitogen-activated protein kinase kinae kinase bck1 (1617 aa).

9 disordered regions span residues 1–73, 167–199, 211–253, 345–399, 455–555, 568–633, 739–820, 832–1144, and 1165–1277; these read MDGQ…SQLQ, GPVH…RTMP, SVAS…GGMS, RQIH…SPNL, DHRR…SSSY, KRSK…LRGK, GVPL…ISPE, EHKR…RGDI, and IDLD…EILR. Positions 19-28 are enriched in low complexity; sequence TQPSQSHMLS. The span at 44 to 60 shows a compositional bias: pro residues; that stretch reads VMPPPPPGPPPGPPPGP. Positions 220 to 248 are enriched in polar residues; it reads TAQNHQSQTGQTNEPTKSPSHRQNNSNTL. The segment covering 482–504 has biased composition (polar residues); sequence KSGSPATQHATLNQGLSSSSTGD. Residues 524 to 533 show a composition bias toward basic and acidic residues; the sequence is RYYESRKGQE. 2 stretches are compositionally biased toward polar residues: residues 535 to 555 and 586 to 596; these read IRPS…SSSY and ESPTSPVNLRQ. Composition is skewed to basic and acidic residues over residues 832-841 and 871-885; these read EHKREVERKQ and FDER…KKAD. Polar residues-rich tracts occupy residues 897 to 907 and 956 to 980; these read PQESYTLTRIN and GGKQ…PQSS. Composition is skewed to basic and acidic residues over residues 1128-1140 and 1189-1198; these read EDER…DSFA and PENDLHKKEN. Polar residues-rich tracts occupy residues 1199 to 1208 and 1257 to 1272; these read QPSSSYTGEM and NQAS…NQKS. Residues 1323–1596 enclose the Protein kinase domain; that stretch reads IIRGQLIGKG…QTLLTRHPFC (274 aa). ATP contacts are provided by residues 1329 to 1337 and K1352; that span reads IGKGTYGRV.

The protein belongs to the protein kinase superfamily. STE Ser/Thr protein kinase family. MAP kinase kinase kinase subfamily.

It carries out the reaction L-seryl-[protein] + ATP = O-phospho-L-seryl-[protein] + ADP + H(+). It catalyses the reaction L-threonyl-[protein] + ATP = O-phospho-L-threonyl-[protein] + ADP + H(+). In terms of biological role, mitogen-activated protein kinase kinase kinase; part of cell wall integrity (CWI) signaling pathway composed of pkcA, the bck1-mkk2-mpka MAPK cascade and the downstream rlmA transcription regulator. The CWI signaling pathway regulates cell wall integrity and pyomelanin formation. CWI also controls oxidative stress response, gliotoxin production, iron adaptation and asexual development. Finally, CWI is constitutively required for A.fumigatus to cope with the temperature increase found in the mammalian lung environment, during infection. The protein is Mitogen-activated protein kinase kinae kinase bck1 of Aspergillus fumigatus (strain ATCC MYA-4609 / CBS 101355 / FGSC A1100 / Af293) (Neosartorya fumigata).